The following is a 304-amino-acid chain: N-acetyl-D-glucosamine kinase (304 aa).

ATP is bound by residues 4-11 and 133-140; these read GFDMGGTK and GLGGGLVI. The Zn(2+) site is built by histidine 157, cysteine 177, cysteine 179, and cysteine 184.

Belongs to the ROK (NagC/XylR) family. NagK subfamily.

It carries out the reaction N-acetyl-D-glucosamine + ATP = N-acetyl-D-glucosamine 6-phosphate + ADP + H(+). It functions in the pathway cell wall biogenesis; peptidoglycan recycling. Catalyzes the phosphorylation of N-acetyl-D-glucosamine (GlcNAc) derived from cell-wall degradation, yielding GlcNAc-6-P. The sequence is that of N-acetyl-D-glucosamine kinase from Pectobacterium atrosepticum (strain SCRI 1043 / ATCC BAA-672) (Erwinia carotovora subsp. atroseptica).